Consider the following 288-residue polypeptide: 4-hydroxybenzoate octaprenyltransferase (288 aa).

8 helical membrane-spanning segments follow: residues 23–43, 46–66, 98–118, 141–161, 163–183, 213–233, 234–254, and 268–288; these read IGSLLLLWPTLWALWLAGRGI, AKILVVFVLGVFFMRAAGCVV, ILFVVLILLSFGLVLTLNSMT, LPQVVLGAAFGWSIPMGFAAV, ESLPLVCWLLLLANICWTVAY, LIIGLLQLATLLLMVAIGWLM, NLGGAFYWSILLAGALFTHQQ, and AFLNNNYVGLVLFLGILISYW.

The protein belongs to the UbiA prenyltransferase family. The cofactor is Mg(2+).

The protein localises to the cell inner membrane. It carries out the reaction all-trans-octaprenyl diphosphate + 4-hydroxybenzoate = 4-hydroxy-3-(all-trans-octaprenyl)benzoate + diphosphate. It participates in cofactor biosynthesis; ubiquinone biosynthesis. Functionally, catalyzes the prenylation of para-hydroxybenzoate (PHB) with an all-trans polyprenyl group. Mediates the second step in the final reaction sequence of ubiquinone-8 (UQ-8) biosynthesis, which is the condensation of the polyisoprenoid side chain with PHB, generating the first membrane-bound Q intermediate 3-octaprenyl-4-hydroxybenzoate. The protein is 4-hydroxybenzoate octaprenyltransferase of Yersinia pestis bv. Antiqua (strain Antiqua).